Here is a 108-residue protein sequence, read N- to C-terminus: Cytochrome c (108 aa).

The heme c site is built by cysteine 19, cysteine 22, histidine 23, and methionine 85.

The protein belongs to the cytochrome c family. Post-translationally, binds 1 heme c group covalently per subunit.

The protein resides in the mitochondrion intermembrane space. Its function is as follows. Electron carrier protein. The oxidized form of the cytochrome c heme group can accept an electron from the heme group of the cytochrome c1 subunit of cytochrome reductase. Cytochrome c then transfers this electron to the cytochrome oxidase complex, the final protein carrier in the mitochondrial electron-transport chain. The polypeptide is Cytochrome c (Cochliobolus lunatus (Filamentous fungus)).